A 243-amino-acid chain; its full sequence is MGKRIRPQRLGRGGPTYRAPSHRYRGRIEHRPYDEQEKKGKVVGKVVELLHDPARNAPVARVRFEDGEERLILVPEGTKVGDIIECGVSAEIKPGNTLPLAEIPEGVPIFNIEGQPGDGGKFARAPGCYATIIAHDVGRTYVQLPSGKVRTFDPRCRATIGVMSGGGKREKPFVKAGKKYYHMRSKGGKWPKVRGVAMNAVDHPFGGGNHQSPGKPTTIARGDPPGRKVGHIAARKTGRGGRR.

Disordered regions lie at residues 1 to 23 (MGKR…PSHR) and 204 to 243 (PFGG…GGRR). A compositionally biased stretch (basic residues) spans 228-243 (KVGHIAARKTGRGGRR).

Belongs to the universal ribosomal protein uL2 family. Part of the 50S ribosomal subunit. Forms a bridge to the 30S subunit in the 70S ribosome.

One of the primary rRNA binding proteins. Required for association of the 30S and 50S subunits to form the 70S ribosome, for tRNA binding and peptide bond formation. It has been suggested to have peptidyltransferase activity; this is somewhat controversial. Makes several contacts with the 16S rRNA in the 70S ribosome. This chain is Large ribosomal subunit protein uL2, found in Methanopyrus kandleri (strain AV19 / DSM 6324 / JCM 9639 / NBRC 100938).